We begin with the raw amino-acid sequence, 505 residues long: Peroxisome proliferator-activated receptor gamma (505 aa).

A glycan (O-linked (GlcNAc) threonine) is linked at T84. S112 carries the phosphoserine; by MAPK modification. Positions 136–210 (AIECRVCGDK…VGMSHNAIRF (75 aa)) form a DNA-binding region, nuclear receptor. NR C4-type zinc fingers lie at residues 139–159 (CRVC…CEGC) and 176–198 (CDLN…FQKC). Residues 205–280 (HNAIRFGRMP…DKSPFVIYDM (76 aa)) are interaction with FAM120B. An NR LBD domain is found at 238–503 (DLRALAKHLY…HPLLQEIYKD (266 aa)). K252 is covalently cross-linked (Glycyl lysine isopeptide (Lys-Gly) (interchain with G-Cter in ubiquitin)). The 9aaTAD motif lies at 495-503 (PLLQEIYKD).

This sequence belongs to the nuclear hormone receptor family. NR1 subfamily. As to quaternary structure, interacts with FOXO1 (acetylated form). Heterodimer with other nuclear receptors, such as RXRA. The heterodimer with the retinoic acid receptor RXRA is called adipocyte-specific transcription factor ARF6. Interacts with NCOA6 coactivator, leading to a strong increase in transcription of target genes. Interacts with coactivator PPARBP, leading to a mild increase in transcription of target genes. Interacts with NOCA7 in a ligand-inducible manner. Interacts with NCOA1 and NCOA2 LXXLL motifs. Interacts with ASXL1, ASXL2, DNTTIP2, FAM120B, MAP2K1/MEK1, NR0B2, PDPK1, PRDM16, PRMT2 and TGFB1I1. Interacts (when activated by agonist) with PPP5C. Interacts with HELZ2 and THRAP3; the interaction stimulates the transcriptional activity of PPARG. Interacts with PER2, the interaction is ligand dependent and blocks PPARG recruitment to target promoters. Interacts with NOCT. Interacts with ACTN4. Interacts (when in the liganded conformation) with GPS2. Interacts with CRY1 and CRY2 in a ligand-dependent manner. In the absence of hormonal ligand, interacts with TACC1. In macrophages, interacts with PAQR3 and STUB1; the interactions promote PPARG poylubiquitination and STUB1-mediated degradation. In terms of processing, O-GlcNAcylation at Thr-84 reduces transcriptional activity in adipocytes. Post-translationally, phosphorylated at basal conditions and dephosphorylated when treated with the ligand. May be dephosphorylated by PPP5C. The phosphorylated form may be inactive and dephosphorylation induces adipogenic activity. Ubiquitinated by E3 ubiquitin-protein ligase complex containing FBXO9; leading to proteasomal degradation. Ubiquitinated at Lys-252 by TRIM55 leading to proteasomal degradation. Ubiquitinated by E3 ubiquitin-protein ligase STUB1/CHIP; leading to proteasomal degradation. Highest expression in adipose tissue. Lower in liver, heart, kidney, stomach, duodenum and colon.

It is found in the nucleus. It localises to the cytoplasm. Its activity is regulated as follows. PDPK1 activates its transcriptional activity independently of its kinase activity. In terms of biological role, nuclear receptor that binds peroxisome proliferators such as hypolipidemic drugs and fatty acids. Once activated by a ligand, the nuclear receptor binds to DNA specific PPAR response elements (PPRE) and modulates the transcription of its target genes, such as acyl-CoA oxidase. It therefore controls the peroxisomal beta-oxidation pathway of fatty acids. Key regulator of adipocyte differentiation and glucose homeostasis. ARF6 acts as a key regulator of the tissue-specific adipocyte P2 (aP2) enhancer. Acts as a critical regulator of gut homeostasis by suppressing NF-kappa-B-mediated pro-inflammatory responses. Plays a role in the regulation of cardiovascular circadian rhythms by regulating the transcription of BMAL1 in the blood vessels. In Macaca mulatta (Rhesus macaque), this protein is Peroxisome proliferator-activated receptor gamma (PPARG).